We begin with the raw amino-acid sequence, 295 residues long: G1/S-specific cyclin-D1 (295 aa).

The 125-residue stretch at 28 to 152 (LRAMLKAEET…LLVNKLKWNL (125 aa)) folds into the Cyclin N-terminal domain. Residues 262–295 (AQQNMDPKAAEEEEEEEEEVDLACTPTDVRDVDI) form a disordered region. A Glycyl lysine isopeptide (Lys-Gly) (interchain with G-Cter in ubiquitin) cross-link involves residue lysine 269. A compositionally biased stretch (acidic residues) spans 272–282 (EEEEEEEEEVD). A Phosphothreonine modification is found at threonine 286.

It belongs to the cyclin family. Cyclin D subfamily. In terms of assembly, interacts with either CDK4 or CDK6 protein kinase to form a serine/threonine kinase holoenzyme complex. The cyclin subunit imparts substrate specificity to the complex. Component of the ternary complex CCND1/CDK4/CDKN1B required for nuclear translocation and modulation of CDK4-mediated kinase activity. Interacts directly with CDKN1B. Can form similar complexes with either CDKN1A or CDKN2A. Interacts with UHRF2; the interaction ubiquitinates CCND1 and appears to occur independently of phosphorylation. Interacts with USP2. Interacts (via cyclin N-terminal domain) with INSM1 (via N-terminal region); the interaction competes with the binding of CCND1 to CDK4 during cell cycle progression and inhibits CDK4 activity. Interacts with CDK4; the interaction is prevented with the binding of CCND1 to INSM1 during cell cycle progression. Post-translationally, phosphorylation at Thr-286 by MAP kinases is required for ubiquitination and degradation by the DCX(AMBRA1) complex. It also plays an essential role for recognition by the FBXO31 component of SCF (SKP1-cullin-F-box) protein ligase complex following DNA damage. Ubiquitinated at Lys-269 by the DCX(AMBRA1) complex during the transition from G1 to S cell phase, leading to its degradation: ubiquitination is dependent on Thr-286 phosphorylation. The DCX(AMBRA1) complex represents the major regulator of CCND1 stability during the G1/S transition. Also ubiquitinated by the SCF(FBXO4) and Cul7-RING(FBXW8) ubiquitin-protein ligase complexes. Following DNA damage it is ubiquitinated by the SCF(FBXO31) protein ligase complex. SCF(FBXO31) ubiquitination is dependent on Thr-286 phosphorylation. Ubiquitinated also by UHRF2 apparently in a phosphorylation-independent manner. Ubiquitination leads to its degradation and G1 arrest. Deubiquitinated by USP2; leading to its stabilization.

The protein resides in the nucleus. The protein localises to the cytoplasm. It localises to the nucleus membrane. Its function is as follows. Regulatory component of the cyclin D1-CDK4 (DC) complex that phosphorylates and inhibits members of the retinoblastoma (RB) protein family including RB1 and regulates the cell-cycle during G(1)/S transition. Phosphorylation of RB1 allows dissociation of the transcription factor E2F from the RB/E2F complex and the subsequent transcription of E2F target genes which are responsible for the progression through the G(1) phase. Hypophosphorylates RB1 in early G(1) phase. Cyclin D-CDK4 complexes are major integrators of various mitogenenic and antimitogenic signals. Also a substrate for SMAD3, phosphorylating SMAD3 in a cell-cycle-dependent manner and repressing its transcriptional activity. Component of the ternary complex, cyclin D1/CDK4/CDKN1B, required for nuclear translocation and activity of the cyclin D-CDK4 complex. Exhibits transcriptional corepressor activity with INSM1 on the NEUROD1 and INS promoters in a cell cycle-independent manner. This chain is G1/S-specific cyclin-D1, found in Homo sapiens (Human).